The following is a 358-amino-acid chain: Histidinol-phosphate aminotransferase (358 aa).

An N6-(pyridoxal phosphate)lysine modification is found at Lys218.

It belongs to the class-II pyridoxal-phosphate-dependent aminotransferase family. Histidinol-phosphate aminotransferase subfamily. As to quaternary structure, homodimer. Pyridoxal 5'-phosphate is required as a cofactor.

It catalyses the reaction L-histidinol phosphate + 2-oxoglutarate = 3-(imidazol-4-yl)-2-oxopropyl phosphate + L-glutamate. Its pathway is amino-acid biosynthesis; L-histidine biosynthesis; L-histidine from 5-phospho-alpha-D-ribose 1-diphosphate: step 7/9. The sequence is that of Histidinol-phosphate aminotransferase from Dehalococcoides mccartyi (strain ATCC BAA-2266 / KCTC 15142 / 195) (Dehalococcoides ethenogenes (strain 195)).